Reading from the N-terminus, the 644-residue chain is Large subunit GTPase 1 homolog (644 aa).

The disordered stretch occupies residues 1–31 (MGRRRAPGGGSLGRVLIRQQTQRSRSHRHTD). 2 positions are modified to phosphoserine: serine 93 and serine 97. The region spanning 164-430 (WRQLWRVIER…LCDCPGLVMP (267 aa)) is the CP-type G domain. GTP is bound at residue 212–215 (NKAD). A disordered region spans residues 253–345 (KEEVDSVAGD…KNAENQQVNN (93 aa)). Over residues 302–326 (CQEDEEEDWQTCSEEDSVPEEEEGC) the composition is skewed to acidic residues. GTP-binding positions include 379-386 (GYPNVGKS) and 423-426 (DCPG). Residues 618–644 (VPGKPWKKHGNRNKKEKSRRLYKHLDV) are disordered. Residues 622 to 644 (PWKKHGNRNKKEKSRRLYKHLDV) show a composition bias toward basic residues.

Belongs to the TRAFAC class YlqF/YawG GTPase family. LSG1 subfamily.

The protein resides in the cytoplasm. It is found in the endoplasmic reticulum. Its subcellular location is the nucleus. The protein localises to the cajal body. It carries out the reaction GTP + H2O = GDP + phosphate + H(+). Functionally, functions as a GTPase. May act by mediating the release of NMD3 from the 60S ribosomal subunit after export into the cytoplasm during the 60S ribosomal subunit maturation. The sequence is that of Large subunit GTPase 1 homolog from Mus musculus (Mouse).